The chain runs to 315 residues: tRNA pseudouridine synthase B (315 aa).

Asp47 serves as the catalytic Nucleophile.

It belongs to the pseudouridine synthase TruB family. Type 1 subfamily.

The enzyme catalyses uridine(55) in tRNA = pseudouridine(55) in tRNA. Responsible for synthesis of pseudouridine from uracil-55 in the psi GC loop of transfer RNAs. This is tRNA pseudouridine synthase B from Shewanella amazonensis (strain ATCC BAA-1098 / SB2B).